The following is a 455-amino-acid chain: Protein U54 (455 aa).

This sequence belongs to the herpesviridae UL82 family.

The polypeptide is Protein U54 (U54) (Homo sapiens (Human)).